Consider the following 220-residue polypeptide: MKKIQIAIDGPASSGKSTVAKIIARNLDLIYLDTGAMYRVATFVALQKETDDAKEIIEFIEKNPISFMNGQKGQEVLMGSENVTEVIRTNEVTNTVSKISAMTEIREFMVAEQQRIAKNGGIIMDGRDIGTVVLPKADLKIFLVASVDERAERRYKENLSKGIPTDLERLKIEISERDRKDSTRAISPLKQAEDAILLDSTGKTINEIVQFIEDKAKELM.

10–18 contributes to the ATP binding site; sequence GPASSGKST.

The protein belongs to the cytidylate kinase family. Type 1 subfamily.

The protein localises to the cytoplasm. The enzyme catalyses CMP + ATP = CDP + ADP. It catalyses the reaction dCMP + ATP = dCDP + ADP. This chain is Cytidylate kinase, found in Lactococcus lactis subsp. lactis (strain IL1403) (Streptococcus lactis).